A 473-amino-acid chain; its full sequence is Bifunctional protein HldE (473 aa).

Residues 1 to 318 form a ribokinase region; the sequence is MKLSMPRFDQ…RAIQREEGSE (318 aa). Residue 194 to 197 participates in ATP binding; sequence NLSE. The active site involves Asp263. The tract at residues 343-473 is cytidylyltransferase; that stretch reads FTNGCFDILH…TAIVEKIRKN (131 aa).

It in the N-terminal section; belongs to the carbohydrate kinase PfkB family. In the C-terminal section; belongs to the cytidylyltransferase family. Homodimer.

It carries out the reaction D-glycero-beta-D-manno-heptose 7-phosphate + ATP = D-glycero-beta-D-manno-heptose 1,7-bisphosphate + ADP + H(+). The catalysed reaction is D-glycero-beta-D-manno-heptose 1-phosphate + ATP + H(+) = ADP-D-glycero-beta-D-manno-heptose + diphosphate. The protein operates within nucleotide-sugar biosynthesis; ADP-L-glycero-beta-D-manno-heptose biosynthesis; ADP-L-glycero-beta-D-manno-heptose from D-glycero-beta-D-manno-heptose 7-phosphate: step 1/4. Its pathway is nucleotide-sugar biosynthesis; ADP-L-glycero-beta-D-manno-heptose biosynthesis; ADP-L-glycero-beta-D-manno-heptose from D-glycero-beta-D-manno-heptose 7-phosphate: step 3/4. In terms of biological role, catalyzes the phosphorylation of D-glycero-D-manno-heptose 7-phosphate at the C-1 position to selectively form D-glycero-beta-D-manno-heptose-1,7-bisphosphate. Its function is as follows. Catalyzes the ADP transfer from ATP to D-glycero-beta-D-manno-heptose 1-phosphate, yielding ADP-D-glycero-beta-D-manno-heptose. The chain is Bifunctional protein HldE from Pseudomonas putida (strain ATCC 47054 / DSM 6125 / CFBP 8728 / NCIMB 11950 / KT2440).